Here is a 354-residue protein sequence, read N- to C-terminus: Ornithine transcarbamylase, mitochondrial (354 aa).

Residues 1 to 32 (MLFNLRILLNNAAFRNGHNFMVRNFRCGQPLQ) constitute a mitochondrion transit peptide. Position 70 is an N6-acetyllysine; alternate (K70). K70 is modified (N6-succinyllysine; alternate). K80 is subject to N6-succinyllysine. K88 is subject to N6-acetyllysine; alternate. Position 88 is an N6-succinyllysine; alternate (K88). Carbamoyl phosphate is bound at residue 90–93 (STRT). At S133 the chain carries Phosphoserine. A carbamoyl phosphate-binding site is contributed by R141. Residue K144 is modified to N6-acetyllysine; alternate. The residue at position 144 (K144) is an N6-succinyllysine; alternate. Carbamoyl phosphate is bound by residues H168 and Q171. N199 serves as a coordination point for L-ornithine. Residues K221, K231, and K238 each carry the N6-acetyllysine; alternate modification. K221, K231, and K238 each carry N6-succinyllysine; alternate. K243 bears the N6-acetyllysine mark. L-ornithine is bound by residues D263, S267, and M268. 2 positions are modified to N6-succinyllysine: K274 and K289. K292 carries the N6-acetyllysine; alternate modification. K292 carries the N6-succinyllysine; alternate modification. C303 (proton acceptor) is an active-site residue. Carbamoyl phosphate is bound at residue 303 to 304 (CL). The residue at position 307 (K307) is an N6-acetyllysine; alternate. K307 bears the N6-succinyllysine; alternate mark. R330 is a binding site for carbamoyl phosphate.

It belongs to the aspartate/ornithine carbamoyltransferase superfamily. OTCase family. In terms of assembly, homotrimer. Acetylation at Lys-88 negatively regulates ornithine carbamoyltransferase activity in response to nutrient signals. As to expression, mainly expressed in liver and intestinal mucosa.

The protein localises to the mitochondrion matrix. The enzyme catalyses carbamoyl phosphate + L-ornithine = L-citrulline + phosphate + H(+). It participates in nitrogen metabolism; urea cycle; L-citrulline from L-ornithine and carbamoyl phosphate: step 1/1. Negatively regulated by lysine acetylation. Its function is as follows. Catalyzes the second step of the urea cycle, the condensation of carbamoyl phosphate with L-ornithine to form L-citrulline. The urea cycle ensures the detoxification of ammonia by converting it to urea for excretion. The protein is Ornithine transcarbamylase, mitochondrial of Homo sapiens (Human).